A 386-amino-acid polypeptide reads, in one-letter code: Patatin-17 (386 aa).

The first 23 residues, 1-23 (MATTKSFLILIFMILATTSSTFA), serve as a signal peptide directing secretion. One can recognise a PNPLA domain in the interval 32–229 (LSIDGGGIRG…TVADPALLSI (198 aa)). Positions 36–41 (GGGIRG) match the GXGXXG motif. The short motif at 75–79 (GTSTG) is the GXSXG element. Serine 77 serves as the catalytic Nucleophile. The N-linked (GlcNAc...) asparagine glycan is linked to asparagine 202. Aspartate 215 (proton acceptor) is an active-site residue. Residues 215–217 (DGA) carry the DGA/G motif. The stretch at 321–384 (ENALTGTTTE…DRKKLRANKA (64 aa)) forms a coiled coil.

This sequence belongs to the patatin family.

The protein localises to the vacuole. Functionally, non-specific lipolytic acyl hydrolase (LAH), an activity which is thought to be involved in the response of tubers to pathogens. Catalyzes the non-specific hydrolysis of phospholipids, glycolipids, sulfolipids, and mono- and diacylglycerols includng p-nitrophenyl caprate. Confers resistance to southern corn rootworm (SCRW). The sequence is that of Patatin-17 from Solanum cardiophyllum (Heartleaf nightshade).